Here is a 102-residue protein sequence, read N- to C-terminus: Small ribosomal subunit protein uS10 (102 aa).

Belongs to the universal ribosomal protein uS10 family. As to quaternary structure, part of the 30S ribosomal subunit.

Its function is as follows. Involved in the binding of tRNA to the ribosomes. The chain is Small ribosomal subunit protein uS10 from Fervidobacterium nodosum (strain ATCC 35602 / DSM 5306 / Rt17-B1).